Reading from the N-terminus, the 318-residue chain is Transaldolase (318 aa).

The Schiff-base intermediate with substrate role is filled by lysine 126.

This sequence belongs to the transaldolase family. Type 1 subfamily. Homodimer.

It localises to the cytoplasm. The enzyme catalyses D-sedoheptulose 7-phosphate + D-glyceraldehyde 3-phosphate = D-erythrose 4-phosphate + beta-D-fructose 6-phosphate. Its pathway is carbohydrate degradation; pentose phosphate pathway; D-glyceraldehyde 3-phosphate and beta-D-fructose 6-phosphate from D-ribose 5-phosphate and D-xylulose 5-phosphate (non-oxidative stage): step 2/3. Its function is as follows. Transaldolase is important for the balance of metabolites in the pentose-phosphate pathway. The protein is Transaldolase of Variovorax paradoxus (strain S110).